Reading from the N-terminus, the 165-residue chain is Endoribonuclease YbeY (165 aa).

H131, H135, and H141 together coordinate Zn(2+).

It belongs to the endoribonuclease YbeY family. Requires Zn(2+) as cofactor.

It is found in the cytoplasm. In terms of biological role, single strand-specific metallo-endoribonuclease involved in late-stage 70S ribosome quality control and in maturation of the 3' terminus of the 16S rRNA. This is Endoribonuclease YbeY from Agathobacter rectalis (strain ATCC 33656 / DSM 3377 / JCM 17463 / KCTC 5835 / VPI 0990) (Eubacterium rectale).